The chain runs to 83 residues: U5-theraphotoxin-Hs1a 1 (83 aa).

Residues 1–21 (MKTSMFLTLTGLGLLFVVCYA) form the signal peptide. The propeptide occupies 22–49 (SESEEKEFPKELLSSIFAADSDFKVEER). 3 cysteine pairs are disulfide-bonded: Cys51-Cys63, Cys56-Cys68, and Cys62-Cys75.

It belongs to the neurotoxin 10 (Hwtx-1) family. 51 (Hntx-8) subfamily. Hntx-8 sub-subfamily. In terms of tissue distribution, expressed by the venom gland.

Its subcellular location is the secreted. Functionally, agglutinates human and mice erythrocytes. This activity can be specifically inhibited by mannosamine. This lectin shows very low toxicity in both mammals and insects. The chain is U5-theraphotoxin-Hs1a 1 from Cyriopagopus schmidti (Chinese bird spider).